Here is a 58-residue protein sequence, read N- to C-terminus: Small ribosomal subunit protein bS21 (58 aa).

This sequence belongs to the bacterial ribosomal protein bS21 family.

This Prochlorococcus marinus (strain MIT 9301) protein is Small ribosomal subunit protein bS21.